A 407-amino-acid chain; its full sequence is Accessory Sec system protein translocase subunit SecY2 (407 aa).

A run of 10 helical transmembrane segments spans residues phenylalanine 13–phenylalanine 33, leucine 65–valine 85, methionine 104–leucine 124, threonine 133–leucine 153, alanine 158–proline 178, isoleucine 190–valine 210, isoleucine 248–leucine 268, proline 287–isoleucine 307, phenylalanine 345–leucine 365, and tyrosine 370–isoleucine 390.

This sequence belongs to the SecY/SEC61-alpha family. SecY2 subfamily. As to quaternary structure, component of the accessory SecA2/SecY2 protein translocase complex required to export cell wall proteins. May form heterotrimers with SecE and SecG subunits.

It localises to the cell membrane. In terms of biological role, part of the accessory SecA2/SecY2 system specifically required for export of possible cell wall proteins. The central subunit of a protein translocation channel. The protein is Accessory Sec system protein translocase subunit SecY2 of Streptococcus sanguinis (strain SK36).